Here is a 460-residue protein sequence, read N- to C-terminus: Ammonium transporter Rh type C (460 aa).

Residues 1 to 9 (MIWNTNLRW) are Cytoplasmic-facing. A helical transmembrane segment spans residues 10-30 (RLPVACLLLEVALIALFGVFV). The Extracellular segment spans residues 31–61 (RYDMDADPHWVQEKVIKNLSTDLENEFYYRY). Residue asparagine 48 is glycosylated (N-linked (GlcNAc...) asparagine). Residues 62-82 (PSFQDVHVMIFVGFGFLMTFL) traverse the membrane as a helical segment. Topologically, residues 83-89 (QRYGYSS) are cytoplasmic. Residues 90–110 (VGFNFLLAAFGIQWALLMQGW) traverse the membrane as a helical segment. Residues 111 to 125 (LQSFDGRYILVDLEN) are Extracellular-facing. A helical transmembrane segment spans residues 126 to 145 (LINADFCVGSVCVAFGAVLG). At 146–151 (KVSPVQ) the chain is on the cytoplasmic side. Residues 152-174 (LLIMTLFQVTLFSINEYILLNLL) form a helical membrane-spanning segment. Over 175 to 179 (EVKDS) the chain is Extracellular. The chain crosses the membrane as a helical span at residues 180–200 (GGSMTIHAFGAYFGLTVAWIL). Over 201–219 (YRPNLHLSKERQSSTYHSD) the chain is Cytoplasmic. A helical membrane pass occupies residues 220–240 (LFAMIGTLFLWMYWPSFNSAI). Topologically, residues 241–251 (SNHGDAQHRAA) are extracellular. A helical membrane pass occupies residues 252-272 (INTYCSLAACVLTSVALSSAL). Over 273–285 (HRKGKLDMVHIQN) the chain is Cytoplasmic. The helical transmembrane segment at 286–303 (ATLAGGVGLGTVAELMVL) threads the bilayer. Over 304 to 306 (PFG) the chain is Extracellular. Residues 307–329 (SLIIGFVCGIVSTLGFVYLTPFL) traverse the membrane as a helical segment. Residues 330–346 (ESRLHIQDTCGVHNLHG) lie on the Cytoplasmic side of the membrane. Residues 347–367 (IPGIIGGIAGAVTASIANIDL) form a helical membrane-spanning segment. The Extracellular segment spans residues 368–396 (YGEEGLAYAFGIERSKLNWSPNMQGRFQA). A helical transmembrane segment spans residues 397-417 (AGLFVSLAMALVGGVIVGVIL). Over 418 to 460 (RLPFWGQAPDENCFEDAVYWEIPKEPKSTALRSEDSSIKPPEP) the chain is Cytoplasmic.

This sequence belongs to the ammonium transporter (TC 2.A.49) family. Rh subfamily. In terms of assembly, homotrimer. Post-translationally, N-glycosylated.

It localises to the apical cell membrane. The enzyme catalyses NH4(+)(in) = NH4(+)(out). It carries out the reaction methylamine(out) = methylamine(in). The catalysed reaction is CO2(out) = CO2(in). Functionally, ammonium transporter involved in the maintenance of acid-base homeostasis. Transports ammonium and its related derivative methylammonium across the plasma membrane of epithelial cells likely contributing to renal transepithelial ammonia transport and ammonia metabolism. Postulated to primarily mediate an electroneutral bidirectional transport of NH3 ammonia species according to a mechanism that implies interaction of an NH4(+) ion with acidic residues of the pore entry followed by dissociation of NH4(+) into NH3 and H(+). As a result NH3 transits through the central pore and is protonated on the extracellular side reforming NH4(+). May act as a CO2 channel providing for renal acid secretion. The polypeptide is Ammonium transporter Rh type C (RHCG) (Bos taurus (Bovine)).